We begin with the raw amino-acid sequence, 207 residues long: Redox-sensing transcriptional repressor Rex (207 aa).

Positions 15–54 (LYYRCLNRLYEEGIEYVASKDIAERLGIKSSQVRKDLSYF) form a DNA-binding region, H-T-H motif. 89-94 (GAGNIG) serves as a coordination point for NAD(+).

Belongs to the transcriptional regulatory Rex family. Homodimer.

Its subcellular location is the cytoplasm. In terms of biological role, modulates transcription in response to changes in cellular NADH/NAD(+) redox state. This is Redox-sensing transcriptional repressor Rex from Thermosipho africanus (strain TCF52B).